Consider the following 671-residue polypeptide: DNA ligase (671 aa).

Residues 32-36 (DAEYD), 81-82 (SL), and glutamate 113 contribute to the NAD(+) site. Residue lysine 115 is the N6-AMP-lysine intermediate of the active site. Residues arginine 136, glutamate 173, lysine 290, and lysine 314 each coordinate NAD(+). The Zn(2+) site is built by cysteine 408, cysteine 411, cysteine 426, and cysteine 432. The region spanning 593 to 671 (EIDSPFAGKT…EAEMIRLLGA (79 aa)) is the BRCT domain.

Belongs to the NAD-dependent DNA ligase family. LigA subfamily. Mg(2+) serves as cofactor. It depends on Mn(2+) as a cofactor.

The enzyme catalyses NAD(+) + (deoxyribonucleotide)n-3'-hydroxyl + 5'-phospho-(deoxyribonucleotide)m = (deoxyribonucleotide)n+m + AMP + beta-nicotinamide D-nucleotide.. In terms of biological role, DNA ligase that catalyzes the formation of phosphodiester linkages between 5'-phosphoryl and 3'-hydroxyl groups in double-stranded DNA using NAD as a coenzyme and as the energy source for the reaction. It is essential for DNA replication and repair of damaged DNA. This is DNA ligase from Salmonella typhi.